The sequence spans 93 residues: Non-histone chromosomal protein 6A (93 aa).

2 disordered regions span residues 1 to 23 (MVTPREPKKRTTRKKKDPNAPKR) and 69 to 93 (PYEAKAQADKKRYESEKELYNATLA). A compositionally biased stretch (basic residues) spans 7-16 (PKKRTTRKKK). The segment at residues 21–89 (PKRALSAYMF…RYESEKELYN (69 aa)) is a DNA-binding region (HMG box). The segment covering 69–87 (PYEAKAQADKKRYESEKEL) has biased composition (basic and acidic residues).

This sequence belongs to the NHP6 family. In terms of assembly, weakly associates with the stable SPT16-POB3 heterodimer to form the FACT (yFACT or SNP) complex, which is associated with nucleosomes. Multiple molecules of NHP6 (NHP6A and/or NHP6B) are required to recruit the SPT16-POB3 heterodimer to DNA.

The protein resides in the nucleus. It is found in the chromosome. Functionally, DNA-binding protein that induces severe bending of DNA. Required for DNA-binding by the FACT complex, a general chromatin factor that acts to reorganize nucleosomes. The FACT complex is involved in multiple processes that require DNA as a template such as mRNA elongation, DNA replication and DNA repair. Also augments the fidelity of transcription by RNA polymerase III independently of any role in the FACT complex. Required for transcriptional initiation fidelity of some but not all tRNA genes. Seems to be functionally redundant with NHP6B. In Saccharomyces cerevisiae (strain ATCC 204508 / S288c) (Baker's yeast), this protein is Non-histone chromosomal protein 6A (NHP6A).